The following is a 281-amino-acid chain: Inhibitor of growth protein 2 (281 aa).

Positions 49 to 101 (VLRELDNKYQETLKEIDDVYEKYKKEDDSNQKKRLQQHLQRALINSQELGDEK) form a coiled coil. The interval 123–204 (SQCFQDPAES…AKQEREASPV (82 aa)) is disordered. Residues 131–141 (ESERASDKSKM) are compositionally biased toward basic and acidic residues. A compositionally biased stretch (basic residues) spans 182-194 (KRSKSAKKKKRSK). Residue K196 forms a Glycyl lysine isopeptide (Lys-Gly) (interchain with G-Cter in SUMO1) linkage. Residues 213–262 (PTYCLCNQVSYGEMIGCDNEQCPIEWFHFSCVSLTYKPKGKWYCPKCRGD) form a PHD-type zinc finger. Zn(2+)-binding residues include C216, C218, C229, C234, H240, C243, C256, and C259. Residues 261–275 (GDNEKTMDKSTEKTK) are compositionally biased toward basic and acidic residues. The interval 261–281 (GDNEKTMDKSTEKTKKERRAR) is disordered. The tract at residues 265–281 (KTMDKSTEKTKKERRAR) is PBR.

Belongs to the ING family. In terms of assembly, interacts with H3K4me3 and to a lesser extent with H3K4me2. Component of a mSin3A-like complex at least consisting of SIN3A, HDAC1, HDAC2, RBBP4/RbAp48, RBBP7/RbAp46, SAP30 and ING2. Post-translationally, sumoylation enhances its association with SIN3A and is required for binding to some target gene promoters, this is the case for TMEM71.

It is found in the nucleus. Seems to be involved in p53/TP53 activation and p53/TP53-dependent apoptotic pathways, probably by enhancing acetylation of p53/TP53. Component of a mSin3A-like corepressor complex, which is probably involved in deacetylation of nucleosomal histones. ING2 activity seems to be modulated by binding to phosphoinositides (PtdInsPs). The sequence is that of Inhibitor of growth protein 2 (Ing2) from Mus musculus (Mouse).